Reading from the N-terminus, the 75-residue chain is UPF0352 protein ESA_01049 (75 aa).

Belongs to the UPF0352 family.

In Cronobacter sakazakii (strain ATCC BAA-894) (Enterobacter sakazakii), this protein is UPF0352 protein ESA_01049.